A 1169-amino-acid chain; its full sequence is DNA-directed RNA polymerase subunit beta (1169 aa).

The protein belongs to the RNA polymerase beta chain family. As to quaternary structure, the RNAP catalytic core consists of 2 alpha, 1 beta, 1 beta' and 1 omega subunit. When a sigma factor is associated with the core the holoenzyme is formed, which can initiate transcription. Interacts with RbpA, which partially restores Rif-inhibited transcription.

It carries out the reaction RNA(n) + a ribonucleoside 5'-triphosphate = RNA(n+1) + diphosphate. Functionally, DNA-dependent RNA polymerase catalyzes the transcription of DNA into RNA using the four ribonucleoside triphosphates as substrates. This subunit often mutates to generate rifampicin (Rif) resistance. Interaction with RbpA partially restores Rif-inhibited transcription; once the subunit is Rif-resistant however RbpA no longer stimulates transcription. This chain is DNA-directed RNA polymerase subunit beta, found in Mycolicibacterium smegmatis (strain ATCC 700084 / mc(2)155) (Mycobacterium smegmatis).